A 570-amino-acid polypeptide reads, in one-letter code: MDEVDKIIMHQLHQIDASIEPTEELANFTPALVVRAVASCLQEISQSLKDLPRSLPMAMAQRFNVATILAERCQESGYRGDIGYQTFLYPNPVELRRLLMFLIEQLPRERQSEDDANRTSHPLSSREQLERQIRQKLKAQLKMPWVPQFCRMVANRKSLGCNSQCISFEPQLNLNVPSANPEDRSKEVQQYFDQQAPNLFQQTSANCYDLIASVMHKNDLERWGDLPSMDPVTLTSTSDDLVGKALPTSPTQTSTTAEKAAQDNSSEATATSTTTTPLELLGQEVQELRTQTEIMLNHRKMVTSKLNELKIRETTASQEKETIESKLKSHEKLSLVLSEPEENVGKLEALVEATENKRQTLNQQWQDYRRPLLDTLSTLRNAQEAQQVQIIRNSIEKLEQEIIAKSQQHNELNSSLKNATQSVAPRQEYTRRIHEFIKNIRKQREDIFKVLDDTRQLQKQLNVVNAQLQRQFNYTDDLLFQSAKHDLHAKKAYKLLAQLHSNCSELVECVSLTGNVTKEIRDLEVQIDGEKLKNVLSRLQQITGDIQRSEQHIQELQTQIRQVENAITVG.

Disordered regions lie at residues 110–129 (RQSE…REQL) and 234–280 (LTST…PLEL). Over residues 248 to 257 (TSPTQTSTTA) the composition is skewed to polar residues. Over residues 265-276 (SSEATATSTTTT) the composition is skewed to low complexity. Coiled coils occupy residues 308-471 (ELKI…LQRQ) and 529-570 (GEKL…ITVG).

It belongs to the CCDC22 family.

The protein is Coiled-coil domain-containing protein 22 homolog of Drosophila willistoni (Fruit fly).